Consider the following 370-residue polypeptide: uncharacterized protein (370 aa).

Lys-207 is subject to N6-(pyridoxal phosphate)lysine.

Belongs to the class-V pyridoxal-phosphate-dependent aminotransferase family. It depends on pyridoxal 5'-phosphate as a cofactor.

This is an uncharacterized protein from Bacillus subtilis (strain 168).